A 331-amino-acid chain; its full sequence is 6-phosphogluconolactonase (331 aa).

Belongs to the cycloisomerase 2 family.

It catalyses the reaction 6-phospho-D-glucono-1,5-lactone + H2O = 6-phospho-D-gluconate + H(+). The protein operates within carbohydrate degradation; pentose phosphate pathway; D-ribulose 5-phosphate from D-glucose 6-phosphate (oxidative stage): step 2/3. Catalyzes the hydrolysis of 6-phosphogluconolactone to 6-phosphogluconate. In Klebsiella pneumoniae (strain 342), this protein is 6-phosphogluconolactonase.